Reading from the N-terminus, the 476-residue chain is UDP-N-acetylmuramate--L-alanine ligase (476 aa).

Residue 112–118 (GTHGKTT) coordinates ATP.

This sequence belongs to the MurCDEF family.

The protein resides in the cytoplasm. The catalysed reaction is UDP-N-acetyl-alpha-D-muramate + L-alanine + ATP = UDP-N-acetyl-alpha-D-muramoyl-L-alanine + ADP + phosphate + H(+). It participates in cell wall biogenesis; peptidoglycan biosynthesis. Functionally, cell wall formation. This chain is UDP-N-acetylmuramate--L-alanine ligase, found in Magnetococcus marinus (strain ATCC BAA-1437 / JCM 17883 / MC-1).